The chain runs to 215 residues: Adenylate kinase (215 aa).

10–15 (GAGKGT) provides a ligand contact to ATP. Residues 30-59 (STGDILRENVKNETELGKKAKEYMDKGLLV) are NMP. AMP is bound by residues threonine 31, arginine 36, 57–59 (LLV), 85–88 (GFPR), and glutamine 92. Residues 126–163 (GRRICKNCGASFHVIYRPPQKEGVCDVCGGELYQREDD) form an LID region. Arginine 127 is a binding site for ATP. Positions 130 and 133 each coordinate Zn(2+). 136–137 (SF) serves as a coordination point for ATP. Zn(2+) is bound by residues cysteine 150 and cysteine 153. AMP-binding residues include arginine 160 and arginine 171. Glutamine 198 provides a ligand contact to ATP.

This sequence belongs to the adenylate kinase family. In terms of assembly, monomer.

It is found in the cytoplasm. The catalysed reaction is AMP + ATP = 2 ADP. Its pathway is purine metabolism; AMP biosynthesis via salvage pathway; AMP from ADP: step 1/1. Its function is as follows. Catalyzes the reversible transfer of the terminal phosphate group between ATP and AMP. Plays an important role in cellular energy homeostasis and in adenine nucleotide metabolism. This is Adenylate kinase from Caldicellulosiruptor bescii (strain ATCC BAA-1888 / DSM 6725 / KCTC 15123 / Z-1320) (Anaerocellum thermophilum).